Here is a 150-residue protein sequence, read N- to C-terminus: Translation machinery-associated protein 17 (150 aa).

Residues Ser-24 and Ser-68 each carry the phosphoserine modification. Residues 110-139 (RKTGHGKSKHEVEAKDNTNKGPDVDMDNSN) form a disordered region. Residues 118–127 (KHEVEAKDNT) are compositionally biased toward basic and acidic residues.

Interacts with RPT6. Interacts with the 40S and 60S ribosomal subunits.

The protein resides in the cytoplasm. It is found in the nucleus. Its function is as follows. ATPase-dedicated chaperone that assists the formation of the RPT6-RPT3 ATPase pair, an early step in proteasome assembly. Plays a key role in maintaining homeostatic proteasome levels and adjusting proteasome assembly when demands increase, such as during proteasome stresses. Function overlaps with RPN14. This is Translation machinery-associated protein 17 (TMA17) from Saccharomyces cerevisiae (strain ATCC 204508 / S288c) (Baker's yeast).